Here is an 80-residue protein sequence, read N- to C-terminus: U-scoloptoxin(15)-Er1a (80 aa).

The N-terminal stretch at M1–S22 is a signal peptide.

It belongs to the scoloptoxin-15 family. In terms of processing, contains 2 disulfide bonds. In terms of tissue distribution, expressed by the venom gland.

The protein resides in the secreted. This is U-scoloptoxin(15)-Er1a from Ethmostigmus rubripes (Giant centipede).